We begin with the raw amino-acid sequence, 558 residues long: Formate--tetrahydrofolate ligase (558 aa).

66 to 73 (TPAGEGKT) is an ATP binding site.

This sequence belongs to the formate--tetrahydrofolate ligase family.

It carries out the reaction (6S)-5,6,7,8-tetrahydrofolate + formate + ATP = (6R)-10-formyltetrahydrofolate + ADP + phosphate. Its pathway is one-carbon metabolism; tetrahydrofolate interconversion. In Neisseria meningitidis serogroup C (strain 053442), this protein is Formate--tetrahydrofolate ligase.